The following is a 358-amino-acid chain: Methylthioribose-1-phosphate isomerase (358 aa).

Residues 54 to 56, arginine 96, and glutamine 205 contribute to the substrate site; that span reads RGA. Aspartate 246 functions as the Proton donor in the catalytic mechanism. 256 to 257 contributes to the substrate binding site; that stretch reads NK.

It belongs to the eIF-2B alpha/beta/delta subunits family. MtnA subfamily.

It catalyses the reaction 5-(methylsulfanyl)-alpha-D-ribose 1-phosphate = 5-(methylsulfanyl)-D-ribulose 1-phosphate. It functions in the pathway amino-acid biosynthesis; L-methionine biosynthesis via salvage pathway; L-methionine from S-methyl-5-thio-alpha-D-ribose 1-phosphate: step 1/6. Catalyzes the interconversion of methylthioribose-1-phosphate (MTR-1-P) into methylthioribulose-1-phosphate (MTRu-1-P). The sequence is that of Methylthioribose-1-phosphate isomerase from Pseudomonas syringae pv. tomato (strain ATCC BAA-871 / DC3000).